Reading from the N-terminus, the 224-residue chain is Ribosomal RNA small subunit methyltransferase G (224 aa).

Residues glycine 69, leucine 74, 119 to 120 (AE), and arginine 137 each bind S-adenosyl-L-methionine.

It belongs to the methyltransferase superfamily. RNA methyltransferase RsmG family.

The protein resides in the cytoplasm. Its function is as follows. Specifically methylates the N7 position of guanine in position 518 of 16S rRNA. The protein is Ribosomal RNA small subunit methyltransferase G of Mycobacterium bovis (strain ATCC BAA-935 / AF2122/97).